The primary structure comprises 138 residues: Basic phospholipase A2 BP-II (138 aa).

The signal sequence occupies residues 1–16 (MRTLWIMAVLLVGVDG). 7 disulfides stabilise this stretch: cysteine 42–cysteine 132, cysteine 44–cysteine 60, cysteine 59–cysteine 112, cysteine 65–cysteine 138, cysteine 66–cysteine 105, cysteine 73–cysteine 98, and cysteine 91–cysteine 103. Ca(2+)-binding residues include glycine 45 and glycine 47. Residue histidine 63 is part of the active site. Aspartate 106 is a catalytic residue.

Belongs to the phospholipase A2 family. Group II subfamily. K49 sub-subfamily. In terms of assembly, exists as a monomer in both solution and crystal states. In the presence of SDS or probably in the presence of phospholipids, assembles to form SDS-resistant stable oligomers. The cofactor is Ca(2+). In terms of tissue distribution, expressed by the venom gland.

The protein localises to the secreted. The catalysed reaction is a 1,2-diacyl-sn-glycero-3-phosphocholine + H2O = a 1-acyl-sn-glycero-3-phosphocholine + a fatty acid + H(+). Its function is as follows. Snake venom phospholipase A2 (PLA2) that shows anticoagulant activities, strong myolytic activity, infiltration of polymorphonuclear cells, and edema in stromal tissues. Induces cell death of Jurkat cells in a concentration-dependent manner. Shows a low phospholipase A2 activity. PLA2 catalyzes the calcium-dependent hydrolysis of the 2-acyl groups in 3-sn-phosphoglycerides. The polypeptide is Basic phospholipase A2 BP-II (Protobothrops flavoviridis (Habu)).